Consider the following 308-residue polypeptide: Rhamnose-binding lectin (308 aa).

A signal peptide spans 1 to 23 (MMLILKLSLLSLLIATPGLLVSG). 3 SUEL-type lectin domains span residues 27–115 (ITCY…SFDC), 123–213 (ICEH…YICT), and 218–308 (VCEG…YACV). Residue N110 is glycosylated (N-linked (GlcNAc...) asparagine).

As to quaternary structure, homotrimer. Expressed in eggs, but not in liver.

The protein localises to the secreted. In terms of biological role, lectin that binds L-rhamnose. Also binds monosaccharides possessing steric similarity to the hydroxyl group orientation at C2 and C4 of the pyranose ring structure of L-rhamnose, such as L-mannose and L-lyxose. The sequence is that of Rhamnose-binding lectin from Silurus asotus (Amur catfish).